Consider the following 40-residue polypeptide: Putative NAD(P)-dependent glyceraldehyde-3-phosphate dehydrogenase PS5 (40 aa).

The polypeptide is Putative NAD(P)-dependent glyceraldehyde-3-phosphate dehydrogenase PS5 (Pinus strobus (Eastern white pine)).